The sequence spans 461 residues: MATATTQRPLKGPAKRMSTWTMTREAITIGFDAGDGFLGRLRGSDITRFRCAGRRFVSISHPDYVDHVLHEARLKYVKSDEYGPIRATAGLNLLTDEGDSWARHRGALNSTFARRHLRGLVGLMIDPIADVTAALVPGAQFDMHQSMVETTLRVVANALFSQDFGPLVQSMHDLATRGLRRAEKLERLGLWGLMPRTVYDTLIWCIYSGVHLPPPLREMQEITLTLDRAINSVIDRRLAEPTNSADLLNVLLSADGGIWPRQRVRDEALTFMLAGHETTANAMSWFWYLMALNPQARDHMLTELDDVLGMRRPTADDLGKLAWTTACLQESQRYFSSVWIIAREAVDDDIIDGHRIRRGTTVVIPIHHIHHDPRWWPDPDRFDPGRFLRCPTDRPRCAYLPFGGGRRICIGQSFALMEMVLMAAIMSQHFTFDLAPGYHVELEATLTLRPKHGVHVIGRRR.

Position 409 (Cys-409) interacts with heme.

The protein belongs to the cytochrome P450 family. Heme serves as cofactor.

This Mycobacterium bovis (strain ATCC BAA-935 / AF2122/97) protein is Putative cytochrome P450 132 (cyp132).